Reading from the N-terminus, the 281-residue chain is Ribosomal RNA small subunit methyltransferase A (281 aa).

6 residues coordinate S-adenosyl-L-methionine: N18, L20, G45, E66, D91, and N118.

Belongs to the class I-like SAM-binding methyltransferase superfamily. rRNA adenine N(6)-methyltransferase family. RsmA subfamily.

The protein resides in the cytoplasm. It carries out the reaction adenosine(1518)/adenosine(1519) in 16S rRNA + 4 S-adenosyl-L-methionine = N(6)-dimethyladenosine(1518)/N(6)-dimethyladenosine(1519) in 16S rRNA + 4 S-adenosyl-L-homocysteine + 4 H(+). Specifically dimethylates two adjacent adenosines (A1518 and A1519) in the loop of a conserved hairpin near the 3'-end of 16S rRNA in the 30S particle. May play a critical role in biogenesis of 30S subunits. The sequence is that of Ribosomal RNA small subunit methyltransferase A from Histophilus somni (strain 129Pt) (Haemophilus somnus).